A 932-amino-acid polypeptide reads, in one-letter code: Protocadherin gamma-A2 (932 aa).

The first 28 residues, 1–28, serve as a signal peptide directing secretion; sequence MAALQKLPHCRKLVLLCFLLATLWEARA. Cadherin domains are found at residues 29–133, 134–242, 243–347, 348–452, 453–562, and 570–682; these read GQIR…APRF, GVEE…APVF, TQPE…APEF, YMTS…APAF, SRTS…APEI, and DGST…EPSA. Residues 29-692 are Extracellular-facing; it reads GQIRYSVREE…IPNDSDLTLY (664 aa). N-linked (GlcNAc...) asparagine glycosylation is found at Asn-419 and Asn-545. Asn-685 carries an N-linked (GlcNAc...) asparagine glycan. Residues 693–713 form a helical membrane-spanning segment; the sequence is LVVAVAAVSCVFLAFVIVLLA. Residues 714–932 lie on the Cytoplasmic side of the membrane; the sequence is HRLRRWHKSR…KKKSGKKEKK (219 aa). 2 disordered regions span residues 798–841 and 902–932; these read LEEE…WPNN and ATLT…KEKK. Residues 806–841 show a composition bias toward polar residues; sequence FSQQAPPNTDWRFSQAQRPGTSGSQNGDDTGTWPNN. Over residues 922–932 the composition is skewed to basic residues; sequence NKKKSGKKEKK.

It localises to the cell membrane. Its function is as follows. Potential calcium-dependent cell-adhesion protein. May be involved in the establishment and maintenance of specific neuronal connections in the brain. The sequence is that of Protocadherin gamma-A2 (PCDHGA2) from Homo sapiens (Human).